The chain runs to 580 residues: MFGVQETFGTALRDKALGVGMDPVRSWVRNVGVVDAKVAAQSGVAVSRAHFEKQPPSNLRKSNFFHFVLALYDRQGQPIEIERTSFVDFVENEKEFSTEKTNNGTHYKLQLLYSNGVRTEQDLYVRLIDSVTKQPISYEGQNKNPEMCRVLLTHEVMCSRCCEKKSCGNRNETPSDPVIIDRFFLKFFLKCNQNCLKTAGNPRDMRRFQVVLSTTVNVDGHVLAVSDNMFVHNNSKHGRRARRLDPSEGTDPSLEYATPCIKAISPSEGWTTGGAMVIIIGDNFFDGLQVVFGTMLVWSELITPHAIRVQTPPRHIPGVVEVTLSYKSKQFCKGAPGRFIYTALNEPTIDYGFQRLQKVIPRHPGDPERMAKEMLLKRAADLVEALYGTPHNNQDIILKRAADIAEALYSVPRNHNQIPALSSSPVHSGMMGINSYGGQLGVSISESQANNQGYIRNTSSISPRGYSSSSTPQQSNYSTPSNSMNGYSNVPMSNLGVPGSPGFINGSPTTSPYGIMPSSPPVGSSGSSSILPFSSSVFPSIKQKSAFAPVIRPQGSPSPACSSSNSNGFRAMTGLVVPPM.

Residues 60–63 form an interaction with DNA region; sequence RKSN. The C5-type zinc finger occupies 148–167; sequence CRVLLTHEVMCSRCCEKKSC. 2 interaction with DNA regions span residues 194 to 201 and 233 to 236; these read NCLKTAGN and NNSK. Residues 259–341 form the IPT/TIG domain; it reads PCIKAISPSE…CKGAPGRFIY (83 aa). A disordered region spans residues 455–492; the sequence is IRNTSSISPRGYSSSSTPQQSNYSTPSNSMNGYSNVPM. Residues 459–481 show a composition bias toward low complexity; the sequence is SSISPRGYSSSSTPQQSNYSTPS. Residues 482–492 show a composition bias toward polar residues; the sequence is NSMNGYSNVPM.

It belongs to the COE family. As to expression, in embryos, expressed in precursors of primary neurons. In adults, expressed at high levels in the brain, and at low levels in the somatic muscles, testis, and possibly the spleen.

It localises to the nucleus. Functionally, may play a pivotal role in the transcriptional cascade that specifies primary neurons in embryos. Stabilizes the higher neural potential of selected progenitor cells that express neurog2/X-ngnr-1 by maintaining Delta-Notch signaling. Thus ensures the transition between neural competence and irreversible commitment to a neural fate. Also promotes neuronal differentiation by activating neurod1 expression, directly or indirectly. This chain is Transcription factor coe2-B, found in Xenopus laevis (African clawed frog).